We begin with the raw amino-acid sequence, 469 residues long: MIKRLPDDFIFGGATAAYQAEGATTIDGKGAVAWDRYLKDNYWYTAEPASDFYHQYPVDLALAEQFGINGIRISIAWSRIFPEGFGEVNAKGVAFYHSLFAECHKHHVEPFVTLHHFDTPEALHSRGDFLNRENIDHFVAYAAYCFKEFPEVTYWTTFNEIGPIGDGQYLVGKFPPGISYDLAKVFQSHHNMMLAHARALVHYKEQAYPGEIGIVHALPTKYPLDPKKPGDVLAAELDDIIHNKFILDATYLGQYSEKTMAGVKHILAENGGSLDLRPEDFELLQAAKDLNDFLGINYYMSDWLRAFDGETEIIHNGKGEKGGSKYQIKGVGQRVFDVDVPRTDWDWMIYPQGLYDQIMRIKADYPGYKKIYITENGLGYKDTCIDGRIDDDARIDYIKQHLAVIADAISTGANVKGYFIWSLMDVFSWSNGYDKRYGLFYVDFETQKRYPKKSAYWYQQLAATKTISM.

D-galactose 6-phosphate-binding residues include glutamine 19, histidine 116, asparagine 159, glutamate 160, and asparagine 297. The active-site Proton donor is glutamate 160. The Nucleophile role is filled by glutamate 375. D-galactose 6-phosphate is bound by residues serine 428, tryptophan 429, lysine 435, and tyrosine 437.

This sequence belongs to the glycosyl hydrolase 1 family.

The enzyme catalyses a 6-phospho-beta-D-galactoside + H2O = D-galactose 6-phosphate + an alcohol. It functions in the pathway carbohydrate metabolism; lactose degradation; D-galactose 6-phosphate and beta-D-glucose from lactose 6-phosphate: step 1/1. In Streptococcus equi subsp. zooepidemicus (strain H70), this protein is 6-phospho-beta-galactosidase.